A 520-amino-acid polypeptide reads, in one-letter code: MPQLSLSSLGLWPMAASPWLLLLLVGASWLLARILAWTYTFYDNCCRLRCFPQPPKRNWFLGHLGLIHSSEEGLLYTQSLACTFGDMCCWWVGPWHAIVRIFHPTYIKPVLFAPAAIVPKDKVFYSFLKPWLGDGLLLSAGEKWSRHRRMLTPAFHFNILKPYMKIFNESVNIMHAKWQLLASEGSARLDMFEHISLMTLDSLQKCVFSFDSHCQEKPSEYIAAILELSALVTKRHQQILLYIDFLYYLTPDGQRFRRACRLVHDFTDAVIQERRRTLPSQGVDDFLQAKAKSKTLDFIDVLLLSKDEDGKKLSDEDIRAEADTFMFEGHDTTASGLSWVLYHLAKHPEYQERCRQEVQELLKDREPKEIEWDDLAQLPFLTMCIKESLRLHPPVPAVSRCCTQDIVLPDGRVIPKGIICLISVFGTHHNPAVWPDPEVYDPFRFDPKNIKERSPLAFIPFSAGPRNCIGQAFAMAEMKVVLGLTLLRFRVLPDHTEPRRKPELVLRAEGGLWLRVEPLS.

A helical transmembrane segment spans residues L11–L31. Residues E328 and C468 each coordinate heme.

The protein belongs to the cytochrome P450 family. Heme serves as cofactor. As to expression, selectively expressed in blood neutrophils and bone marrow cells. Coexpressed with CYP4F3B in prostate, ileum and trachea. In terms of tissue distribution, selectively expressed in liver and kidney. It is also the predominant CYP4F isoform in trachea and tissues of the gastrointestinal tract.

The protein resides in the endoplasmic reticulum membrane. Its subcellular location is the microsome membrane. It catalyses the reaction an organic molecule + reduced [NADPH--hemoprotein reductase] + O2 = an alcohol + oxidized [NADPH--hemoprotein reductase] + H2O + H(+). The enzyme catalyses leukotriene B4 + reduced [NADPH--hemoprotein reductase] + O2 = 20-hydroxy-leukotriene B4 + oxidized [NADPH--hemoprotein reductase] + H2O + H(+). The catalysed reaction is 20-hydroxy-leukotriene B4 + reduced [NADPH--hemoprotein reductase] + O2 = 20-oxo-leukotriene B4 + oxidized [NADPH--hemoprotein reductase] + 2 H2O + H(+). It carries out the reaction 20-oxo-leukotriene B4 + reduced [NADPH--hemoprotein reductase] + O2 = 20-carboxy-leukotriene B4 + oxidized [NADPH--hemoprotein reductase] + H2O + 2 H(+). It catalyses the reaction (5Z,8Z,11Z)-eicosatrienoate + reduced [NADPH--hemoprotein reductase] + O2 = 20-hydroxy-(5Z,8Z,11Z)-eicosatrienoate + oxidized [NADPH--hemoprotein reductase] + H2O + H(+). The enzyme catalyses (5Z,8Z,11Z,14Z)-eicosatetraenoate + reduced [NADPH--hemoprotein reductase] + O2 = 20-hydroxy-(5Z,8Z,11Z,14Z)-eicosatetraenoate + oxidized [NADPH--hemoprotein reductase] + H2O + H(+). The catalysed reaction is (5Z,8Z,11Z,14Z,17Z)-eicosapentaenoate + reduced [NADPH--hemoprotein reductase] + O2 = 19-hydroxy-(5Z,8Z,11Z,14Z,17Z)-eicosapentaenoate + oxidized [NADPH--hemoprotein reductase] + H2O + H(+). It carries out the reaction (5Z,8Z,11Z,14Z,17Z)-eicosapentaenoate + reduced [NADPH--hemoprotein reductase] + O2 = 20-hydroxy-(5Z,8Z,11Z,14Z,17Z)-eicosapentaenoate + oxidized [NADPH--hemoprotein reductase] + H2O + H(+). It catalyses the reaction (4Z,7Z,10Z,13Z,16Z,19Z)-docosahexaenoate + reduced [NADPH--hemoprotein reductase] + O2 = 21-hydroxy-(4Z,7Z,10Z,13Z,16Z,19Z)-docosahexaenoate + oxidized [NADPH--hemoprotein reductase] + H2O + H(+). The enzyme catalyses (4Z,7Z,10Z,13Z,16Z,19Z)-docosahexaenoate + reduced [NADPH--hemoprotein reductase] + O2 = 22-hydroxy-(4Z,7Z,10Z,13Z,16Z,19Z)-docosahexaenoate + oxidized [NADPH--hemoprotein reductase] + H2O + H(+). The catalysed reaction is 8,9-epoxy-(5Z,11Z,14Z)-eicosatrienoate + reduced [NADPH--hemoprotein reductase] + O2 = 20-hydroxy-8,9-epoxy-(5Z,11Z,14Z)-eicosatrienoate + oxidized [NADPH--hemoprotein reductase] + H2O + H(+). It carries out the reaction 11,12-epoxy-(5Z,8Z,14Z)-eicosatrienoate + reduced [NADPH--hemoprotein reductase] + O2 = 20-hydroxy-11,12-epoxy-(5Z,8Z,14Z)-eicosatrienoate + oxidized [NADPH--hemoprotein reductase] + H2O + H(+). It catalyses the reaction 14,15-epoxy-(5Z,8Z,11Z)-eicosatrienoate + reduced [NADPH--hemoprotein reductase] + O2 = 20-hydroxy-14,15-epoxy-(5Z,8Z,11Z)-eicosatrienoate + oxidized [NADPH--hemoprotein reductase] + H2O + H(+). The enzyme catalyses 12,13-epoxy-(9Z)-octadecenoate + reduced [NADPH--hemoprotein reductase] + O2 = 18-hydroxy-12,13-epoxy-(9Z)-octadecenoate + oxidized [NADPH--hemoprotein reductase] + H2O + H(+). The catalysed reaction is 9,10-epoxy-(12Z)-octadecenoate + reduced [NADPH--hemoprotein reductase] + O2 = 18-hydroxy-9,10-epoxy-(12Z)-octadecenoate + oxidized [NADPH--hemoprotein reductase] + H2O + H(+). It carries out the reaction 9,10-epoxyoctadecanoate + reduced [NADPH--hemoprotein reductase] + O2 = 18-hydroxy-9,10-epoxy-octadecanoate + oxidized [NADPH--hemoprotein reductase] + H2O + H(+). It catalyses the reaction (12R)-hydroxy-(9Z)-octadecenoate + reduced [NADPH--hemoprotein reductase] + O2 = (12R),18-dihydroxy-(9Z)-octadecenoate + oxidized [NADPH--hemoprotein reductase] + H2O + H(+). The enzyme catalyses 12-hydroxyoctadecanoate + reduced [NADPH--hemoprotein reductase] + O2 = 12,18-dihydroxyoctadecanoate + oxidized [NADPH--hemoprotein reductase] + H2O + H(+). The catalysed reaction is 5-hydroxy-(6E,8Z,11Z,14Z)-eicosatetraenoate + reduced [NADPH--hemoprotein reductase] + O2 = 5,20-dihydroxy-(6E,8Z,11Z,14Z)-eicosatetraenoate + oxidized [NADPH--hemoprotein reductase] + H2O + H(+). It carries out the reaction 8-hydroxy-(5Z,9E,11Z,14Z)-eicosatetraenoate + reduced [NADPH--hemoprotein reductase] + O2 = 8,20-dihydroxy-(5Z,9E,11Z,14Z)-eicosatetraenoate + oxidized [NADPH--hemoprotein reductase] + H2O + H(+). It catalyses the reaction 12-hydroxy-(5Z,8Z,10E,14Z)-eicosatetraenoate + reduced [NADPH--hemoprotein reductase] + O2 = 12,20-dihydroxy-(5Z,8Z,10E,14Z)-eicosatetraenoate + oxidized [NADPH--hemoprotein reductase] + H2O + H(+). The enzyme catalyses 5-hydroxy-(6E,8Z,11Z,14Z,17Z)-eicosapentaenoate + reduced [NADPH--hemoprotein reductase] + O2 = 5,20-dihydroxy-(6E,8Z,11Z,14Z,17Z)-eicosapentaenoate + oxidized [NADPH--hemoprotein reductase] + H2O + H(+). The catalysed reaction is lipoxin A4 + reduced [NADPH--hemoprotein reductase] + O2 = 20-hydroxy-lipoxin A4 + oxidized [NADPH--hemoprotein reductase] + H2O + H(+). It carries out the reaction lipoxin B4 + reduced [NADPH--hemoprotein reductase] + O2 = 20-hydroxy-lipoxin B4 + oxidized [NADPH--hemoprotein reductase] + H2O + H(+). It catalyses the reaction 22-hydroxydocosanoate + reduced [NADPH--hemoprotein reductase] + O2 = 22-oxodocosanoate + oxidized [NADPH--hemoprotein reductase] + 2 H2O + H(+). The enzyme catalyses 22-oxodocosanoate + reduced [NADPH--hemoprotein reductase] + O2 = docosanedioate + oxidized [NADPH--hemoprotein reductase] + H2O + 2 H(+). The catalysed reaction is docosanoate + reduced [NADPH--hemoprotein reductase] + O2 = 22-hydroxydocosanoate + oxidized [NADPH--hemoprotein reductase] + H2O + H(+). It carries out the reaction tetracosanoate + reduced [NADPH--hemoprotein reductase] + O2 = 24-hydroxytetracosanoate + oxidized [NADPH--hemoprotein reductase] + H2O + H(+). It catalyses the reaction hexacosanoate + reduced [NADPH--hemoprotein reductase] + O2 = 26-hydroxyhexacosanoate + oxidized [NADPH--hemoprotein reductase] + H2O + H(+). The enzyme catalyses 26-hydroxyhexacosanoate + reduced [NADPH--hemoprotein reductase] + O2 = 26-oxohexacosanoate + oxidized [NADPH--hemoprotein reductase] + 2 H2O + H(+). The catalysed reaction is 26-oxohexacosanoate + reduced [NADPH--hemoprotein reductase] + O2 = hexacosanedioate + oxidized [NADPH--hemoprotein reductase] + H2O + 2 H(+). It carries out the reaction 3-hydroxyoctadecanoate + reduced [NADPH--hemoprotein reductase] + O2 = 3,18-dihydroxyoctadecanoate + oxidized [NADPH--hemoprotein reductase] + H2O + H(+). It catalyses the reaction 3-hydroxyhexadecanoate + reduced [NADPH--hemoprotein reductase] + O2 = 3,16-dihydroxyhexadecanoate + oxidized [NADPH--hemoprotein reductase] + H2O + H(+). Its pathway is lipid metabolism; leukotriene B4 degradation. It participates in lipid metabolism; arachidonate metabolism. Inhibited by carbon monoxide (CO). A cytochrome P450 monooxygenase involved in the metabolism of various endogenous substrates, including fatty acids and their oxygenated derivatives (oxylipins). Mechanistically, uses molecular oxygen inserting one oxygen atom into a substrate, and reducing the second into a water molecule, with two electrons provided by NADPH via cytochrome P450 reductase (CPR; NADPH-ferrihemoprotein reductase). May play a role in inactivation of pro-inflammatory and anti-inflammatory oxylipins during the resolution of inflammation. Functionally, catalyzes predominantly the oxidation of the terminal carbon (omega-oxidation) of oxylipins in myeloid cells, displaying higher affinity for arachidonate metabolite leukotriene B4 (LTB4). Inactivates LTB4 via three successive oxidative transformations to 20-hydroxy-LTB4, then to 20-oxo-LTB4 and to 20-carboxy-LTB4. Has omega-hydroxylase activity toward long-chain fatty acid epoxides with preference for 8,9-epoxy-(5Z,11Z,14Z)-eicosatrienoate (EET) and 9,10-epoxyoctadecanoate. Omega-hydroxylates monohydroxy polyunsaturated fatty acids (PUFAs), including hydroxyeicosatetraenoates (HETEs) and hydroxyeicosapentaenoates (HEPEs), to dihydroxy compounds. Contributes to the degradation of saturated very long-chain fatty acids (VLCFAs) such as docosanoic acid, by catalyzing successive omega-oxidations to the corresponding dicarboxylic acid, thereby initiating chain shortening. Has low hydroxylase activity toward PUFAs. Its function is as follows. Catalyzes predominantly the oxidation of the terminal carbon (omega-oxidation) of polyunsaturated fatty acids (PUFAs). Participates in the conversion of arachidonic acid to 20-hydroxyeicosatetraenoic acid (20-HETE), a signaling molecule acting both as vasoconstrictive and natriuretic with overall effect on arterial blood pressure. Has high omega-hydroxylase activity toward other PUFAs, including eicosatrienoic acid (ETA), eicosapentaenoic acid (EPA) and docosahexaenoic acid (DHA). Can also catalyze the oxidation of the penultimate carbon (omega-1 oxidation) of PUFAs with lower efficiency. Contributes to the degradation of saturated very long-chain fatty acids (VLCFAs) such as docosanoic acid and hexacosanoic acid, by catalyzing successive omega-oxidations to the corresponding dicarboxylic acids, thereby initiating chain shortening. Omega-hydroxylates long-chain 3-hydroxy fatty acids, likely initiating the oxidative conversion to the corresponding 3-hydroxydicarboxylic fatty acids. Has omega-hydroxylase activity toward long-chain fatty acid epoxides with preference for 8,9-epoxy-(5Z,11Z,14Z)-eicosatrienoate (EET) and 9,10-epoxyoctadecanoate. The sequence is that of Cytochrome P450 4F3 from Homo sapiens (Human).